Reading from the N-terminus, the 495-residue chain is Putative FAD-containing monooxygenase MymA (495 aa).

Residues Ser-15, Glu-36, Trp-45, 56-57 (DS), and Val-104 each bind FAD.

The protein belongs to the FAD-binding monooxygenase family. FAD serves as cofactor.

Its function is as follows. Required for maintaining the appropriate mycolic acid composition and permeability of the envelope on its exposure to acidic pH. In Mycobacterium tuberculosis (strain CDC 1551 / Oshkosh), this protein is Putative FAD-containing monooxygenase MymA (mymA).